The primary structure comprises 333 residues: Fatty acid hydroxylase domain-containing protein 2 (333 aa).

The next 6 helical transmembrane spans lie at 29–49, 77–97, 134–154, 168–188, 215–235, and 237–257; these read FILGSGLLSFVAFWNSVTWHL, ILFFIGAIQVPCLFFWSFNGL, TVLFNQCMVSFPMVVFLYPFL, FHWFLLELAIFTLIEEVLFYY, VISLYAHPIEHVVSNMLPAIV, and PLVMGSHLSSITMWFSLALII. In terms of domain architecture, Fatty acid hydroxylase spans 176-299; sequence AIFTLIEEVL…LGVLDHLHGT (124 aa).

It belongs to the sterol desaturase family.

Its subcellular location is the cytoplasm. The protein localises to the membrane. Functionally, promotes megakaryocyte differentiation by enhancing ERK phosphorylation and up-regulating RUNX1 expression. The polypeptide is Fatty acid hydroxylase domain-containing protein 2 (FAXDC2) (Macaca fascicularis (Crab-eating macaque)).